The chain runs to 1104 residues: Mitogen-activated protein kinase kinase kinase 9 (1104 aa).

Over residues 12-22 (ASAAAAAPPGE) the composition is skewed to low complexity. A disordered region spans residues 12-47 (ASAAAAAPPGEDGAGAGAEEEEEEEEEAAAAVGPGE). Residues 29-39 (AEEEEEEEEEA) show a composition bias toward acidic residues. Positions 52–116 (APLPYWTAVF…PSNYVTPRSA (65 aa)) constitute an SH3 domain. The Protein kinase domain maps to 144–412 (LTLEEIIGIG…LTTIEESGFF (269 aa)). ATP contacts are provided by residues 150 to 158 (IGIGGFGKV) and Lys-171. Asp-268 (proton acceptor) is an active-site residue. A phosphothreonine; by autocatalysis mark is found at Thr-304 and Thr-305. Ser-308 bears the Phosphoserine; by autocatalysis mark. The residue at position 312 (Thr-312) is a Phosphothreonine; by autocatalysis. Leucine-zipper stretches follow at residues 430 to 451 (IQEM…EEEL) and 465 to 486 (LRRR…ELNI). Disordered stretches follow at residues 532-636 (ASPT…PHFH), 675-742 (MEDE…LKRG), 781-819 (EEPE…FKKE), and 890-1038 (RDPN…CFAS). Ser-533 bears the Phosphoserine mark. Composition is skewed to polar residues over residues 566 to 575 (PGESSKTWGR) and 723 to 739 (PVNS…TNSL). Positions 785–797 (PPAREEKKRREGL) are enriched in basic and acidic residues. Residues 893–910 (NQSLTPTHVTLTTPSQPS) show a composition bias toward polar residues. Low complexity predominate over residues 929–944 (SRSPSSNGLSPSPGAG). Over residues 1014–1038 (HARSTSPANSSSTETPSNLDSCFAS) the composition is skewed to polar residues.

This sequence belongs to the protein kinase superfamily. STE Ser/Thr protein kinase family. MAP kinase kinase kinase subfamily. As to quaternary structure, homodimer. Requires Mg(2+) as cofactor. Autophosphorylation on serine and threonine residues within the activation loop plays a role in enzyme activation. Thr-312 is likely to be the main autophosphorylation site. Autophosphorylation also occurs on Thr-304 and Ser-308. In terms of tissue distribution, expressed in epithelial tumor cell lines of colonic, breast and esophageal origin.

It carries out the reaction L-seryl-[protein] + ATP = O-phospho-L-seryl-[protein] + ADP + H(+). The enzyme catalyses L-threonyl-[protein] + ATP = O-phospho-L-threonyl-[protein] + ADP + H(+). Homodimerization via the leucine zipper domains is required for autophosphorylation of multiple sites in the activation loop and subsequent activation. Autophosphorylation at Thr-312 is the key step in activation of MAP3K9/MLK1 and is required for full phosphorylation. Autophosphorylation at Thr-304 and Ser-308 have been shown to be of secondary importance in the activation of MAP3K9/MLK1. CEP-1347 and many indolocarbazole analogs have been shown to act as inhibitors of MAP3K9/MLK1 activity. Functionally, serine/threonine kinase which acts as an essential component of the MAP kinase signal transduction pathway. Plays an important role in the cascades of cellular responses evoked by changes in the environment. Once activated, acts as an upstream activator of the MKK/JNK signal transduction cascade through the phosphorylation of MAP2K4/MKK4 and MAP2K7/MKK7 which in turn activate the JNKs. The MKK/JNK signaling pathway regulates stress response via activator protein-1 (JUN) and GATA4 transcription factors. Also plays a role in mitochondrial death signaling pathway, including the release cytochrome c, leading to apoptosis. In Homo sapiens (Human), this protein is Mitogen-activated protein kinase kinase kinase 9 (MAP3K9).